Reading from the N-terminus, the 271-residue chain is tRNA pseudouridine synthase A (271 aa).

D51 serves as the catalytic Nucleophile. Y109 contributes to the substrate binding site.

It belongs to the tRNA pseudouridine synthase TruA family. In terms of assembly, homodimer.

The catalysed reaction is uridine(38/39/40) in tRNA = pseudouridine(38/39/40) in tRNA. In terms of biological role, formation of pseudouridine at positions 38, 39 and 40 in the anticodon stem and loop of transfer RNAs. The polypeptide is tRNA pseudouridine synthase A (Methylococcus capsulatus (strain ATCC 33009 / NCIMB 11132 / Bath)).